The primary structure comprises 191 residues: NAD(P)H-dependent FMN reductase LOT6 (191 aa).

FMN contacts are provided by residues Arg-11, 94–97 (QYNW), and Tyr-124.

In terms of assembly, homodimer.

The protein localises to the cytoplasm. Its subcellular location is the nucleus. It catalyses the reaction FMNH2 + NADP(+) = FMN + NADPH + 2 H(+). The enzyme catalyses FMNH2 + NAD(+) = FMN + NADH + 2 H(+). In terms of biological role, has several reductase activities that are NAD(P)H-dependent and involve FMN as a cofactor, ferricyanide being the best substrate for reduction. May be involved in ferric iron assimilation. The protein is NAD(P)H-dependent FMN reductase LOT6 (LOT6) of Saccharomyces cerevisiae (strain ATCC 204508 / S288c) (Baker's yeast).